The sequence spans 502 residues: Probable cytosol aminopeptidase (502 aa).

Residues K269 and D274 each coordinate Mn(2+). K281 is a catalytic residue. Residues D292, D351, and E353 each contribute to the Mn(2+) site. R355 is an active-site residue.

This sequence belongs to the peptidase M17 family. Mn(2+) serves as cofactor.

It localises to the cytoplasm. The enzyme catalyses Release of an N-terminal amino acid, Xaa-|-Yaa-, in which Xaa is preferably Leu, but may be other amino acids including Pro although not Arg or Lys, and Yaa may be Pro. Amino acid amides and methyl esters are also readily hydrolyzed, but rates on arylamides are exceedingly low.. It catalyses the reaction Release of an N-terminal amino acid, preferentially leucine, but not glutamic or aspartic acids.. Functionally, presumably involved in the processing and regular turnover of intracellular proteins. Catalyzes the removal of unsubstituted N-terminal amino acids from various peptides. The chain is Probable cytosol aminopeptidase from Vibrio parahaemolyticus serotype O3:K6 (strain RIMD 2210633).